Reading from the N-terminus, the 422-residue chain is Adenylosuccinate synthetase (422 aa).

Residues 11-17 and 39-41 each bind GTP; these read GDEGKGK and GHT. Residue aspartate 12 is the Proton acceptor of the active site. The Mg(2+) site is built by aspartate 12 and glycine 39. IMP is bound by residues 12 to 15, 37 to 40, threonine 129, arginine 143, asparagine 220, threonine 235, and arginine 299; these read DEGK and NAGH. Histidine 40 (proton donor) is an active-site residue. A substrate-binding site is contributed by 295-301; that stretch reads VTTGRKR. GTP-binding positions include arginine 301, 327 to 329, and 410 to 412; these read KLD and GTG.

This sequence belongs to the adenylosuccinate synthetase family. In terms of assembly, homodimer. Mg(2+) serves as cofactor.

Its subcellular location is the cytoplasm. It carries out the reaction IMP + L-aspartate + GTP = N(6)-(1,2-dicarboxyethyl)-AMP + GDP + phosphate + 2 H(+). It participates in purine metabolism; AMP biosynthesis via de novo pathway; AMP from IMP: step 1/2. In terms of biological role, plays an important role in the de novo pathway and in the salvage pathway of purine nucleotide biosynthesis. Catalyzes the first committed step in the biosynthesis of AMP from IMP. This is Adenylosuccinate synthetase from Arthroderma otae (strain ATCC MYA-4605 / CBS 113480) (Microsporum canis).